Consider the following 579-residue polypeptide: Nuclear receptor subfamily 1 group D member 2 (579 aa).

The interval 1–60 (MEVNAGGVIAYISSSSSASSPASCHSEGSENSFQSSSSSVPSSPNSSNSDTNGNPKNGDL) is required for phosphorylation by CSNK1E and cytoplasmic localization. Positions 1–99 (MEVNAGGVIA…HSGVTKFSGM (99 aa)) are modulating. The span at 13–54 (SSSSSASSPASCHSEGSENSFQSSSSSVPSSPNSSNSDTNGN) shows a compositional bias: low complexity. Residues 13–61 (SSSSSASSPASCHSEGSENSFQSSSSSVPSSPNSSNSDTNGNPKNGDLA) form a disordered region. Ser46 carries the phosphoserine; by GSK3-beta modification. The segment at residues 100–176 (VLLCKVCGDV…VGMSRDAVRF (77 aa)) is a DNA-binding region (nuclear receptor). 2 consecutive NR C4-type zinc fingers follow at residues 103–123 (CKVC…CEGC) and 140–164 (CLKN…FKKC). Residues Lys162 and Lys163 each carry the N6-acetyllysine; by KAT5 modification. Residues 222-250 (PAQEQLRPKPQLEQENIKSSSPPSSDFAK) are disordered. Residues 227-237 (LRPKPQLEQEN) show a composition bias toward basic and acidic residues. Disulfide bonds link Cys337–Cys343 and Cys374–Cys384. One can recognise an NR LBD domain in the interval 369-579 (KNSYLCNTGG…EELLAFKVHP (211 aa)). Heme contacts are provided by Cys384 and His568. Residues 397-579 (SGHEIWEEFS…EELLAFKVHP (183 aa)) form an interaction with ZNHIT1 region.

It belongs to the nuclear hormone receptor family. NR1 subfamily. As to quaternary structure, binds DNA as a monomer or a homodimer. Interacts with NCOA5 coactivator, leading to a strong increase of transcription of target genes. Interacts (via N-terminus) with KAT5. Interacts (via C-terminus) with HDAC1. Interacts with ZNHIT1. Interacts with SIAH2. Deacetylated by HDAC1. Acetylation and deacetylation regulate its transcriptional regulatory activity. Post-translationally, under more reducing intracellular redox conditions, Cys-384 is in its heme-bound state, which is optimal for recruitment of the NCOR1/HDAC3 corepressor complex and repression of target genes. When subjected to oxidative stress conditions, Cys-384 undergoes oxidation to form a disulfide bridge with Cys-374, also triggering a ligand switch that results in release of bound heme and derepression of target genes. In terms of processing, ubiquitinated by SIAH2; leading to proteasomal degradation. Phosphorylated by CSNK1E; phosphorylation enhances its cytoplasmic localization. In terms of tissue distribution, widely expressed. Expressed at high levels in the liver, adipose tissue, skeletal muscle and brain. Expression oscillates diurnally in the suprachiasmatic nucleus (SCN) of the hypothalamus as well as in peripheral tissues.

The protein resides in the nucleus. The protein localises to the cytoplasm. The heme-bound form can bind gaseous signaling molecules such as CO and nitric oxide (NO) and NO can reverse its transcriptional repressor activity. Functionally, transcriptional repressor which coordinates circadian rhythm and metabolic pathways in a heme-dependent manner. Integral component of the complex transcription machinery that governs circadian rhythmicity and forms a critical negative limb of the circadian clock by directly repressing the expression of core clock components BMAL1 and CLOCK. Also regulates genes involved in metabolic functions, including lipid metabolism and the inflammatory response. Acts as a receptor for heme which stimulates its interaction with the NCOR1/HDAC3 corepressor complex, enhancing transcriptional repression. Recognizes two classes of DNA response elements within the promoter of its target genes and can bind to DNA as either monomers or homodimers, depending on the nature of the response element. Binds as a monomer to a response element composed of the consensus half-site motif 5'-[A/G]GGTCA-3' preceded by an A/T-rich 5' sequence (RevRE), or as a homodimer to a direct repeat of the core motif spaced by two nuclegotides (RevDR-2). Acts as a potent competitive repressor of ROR alpha (RORA) function and also negatively regulates the expression of NR1D1. Regulates lipid and energy homeostasis in the skeletal muscle via repression of genes involved in lipid metabolism and myogenesis including: CD36, FABP3, FABP4, UCP3, SCD1 and MSTN. Regulates hepatic lipid metabolism via the repression of APOC3. Represses gene expression at a distance in macrophages by inhibiting the transcription of enhancer-derived RNAs (eRNAs). In addition to its activity as a repressor, can also act as a transcriptional activator. Acts as a transcriptional activator of the sterol regulatory element-binding protein 1 (SREBF1) and the inflammatory mediator interleukin-6 (IL6) in the skeletal muscle. Plays a role in the regulation of circadian sleep/wake cycle; essential for maintaining wakefulness during the dark phase or active period. Key regulator of skeletal muscle mitochondrial function; negatively regulates the skeletal muscle expression of core clock genes and genes involved in mitochondrial biogenesis, fatty acid beta-oxidation and lipid metabolism. May play a role in the circadian control of neutrophilic inflammation in the lung. This Homo sapiens (Human) protein is Nuclear receptor subfamily 1 group D member 2.